We begin with the raw amino-acid sequence, 1597 residues long: MGVPTKISILGRESIVADFGIWRNYVAKDLLNSCSSSTYILISDTNITPLYLDGFQKSFDDAAANLSPKPRLLTYEIPPGESSKSRETKAGIEDWMLTRQPPCGRDTVIIALGGGVIGDLIGFVAATYMRGVRFVQVPTTLLAMVDSSIGGKTAIDTPNGKNLIGAIWQPQRIYLDMEFLNTLPEREFINGMAEVIKTAAISSEEKFAALEDDAEIILAAVKSKNTPERPRFSGIEETLKRTILSSAEFKAQVVSADEREGGLRNLLNFGHSIGHAIEAILAPQVLHGECVAIGMVKEAELARHLGILNNVSVSRISKCLASYGLPTSLKDERIRKLTADKHCSVEQLITYMGVDKKNDGPKKKVVLLSAIGRTHEPRASTVSNEEIQIVLAPSIEVSPGVPKNLNVTCTPPGSKSISNRALVLAALGSGTCRLKNLLHSDDTEVMLNALERLGAATFSWENEGEVLVVNGKGGKMKASPDELYLGNAGTASRFLTTVATLAQKSSVDSSVLTGNARMKQRPIGDLVDALAANGAGVEYLENSGSLPLKIAASGGFAGGEINLAAKVSSQYVSSLLMCAPYAKKPVTLRLVGGKPISQTYIDMTTTMMRSFGIDVKKSETEEHTYHIPLGFYISPAEYIVESDASSSTYPLAVAAITGTSCTVPNIGSKSLQGDARFAVEVLRPMGCTVDQKDFSTTVTGPANGILRPLPNVDMEPMTDAFLTASVLAAVARGGGSNHTTRIFGIANQRVKECNRIKAMKDELAKFGVTCREHDDGLEIDGIDRSTLRHPSDGVYCYDDHRVAMSFSVLSLVAPQPTLILEKECVGKTWPGWWDSLAQTFKVKLDGKEVEKKTGTGGIVHLDKPAASIFIIGMRGAGKTTSGVWVSKALQRPFIDLDDELERTEGMTIPEIIKQRGWEGFREAELSLLRRVMTEKPTGYIFACGGGIVETPEARKLLIQYHKTKGNVILVMRDIKEIMDFLKIDKTRPAYVEDMMSVWLRRKPWYQECSNVQYFSRLTGLDGMAQVLGGFNRFLKVITGQVDSLAQMRSKENTFFVSLTLPDLAPAAPILKEVTLGSDAVELRVDLLKDPQSDSEIPSVDYVAEQISVLRSRTSVPLVFTIRTKAQGGRFPDDAYDAALQLYRLAIRMGSEFVDLEISFPEQLLRTVTEMKGFSKIIASHHDPKGELSWANGSWIQFYNKALQYGDVIKLVGVARSLDDNASLKKFKTWAEEKHDVPIIAINMGDKGQLSRMLNGFMTPVSHPSLPFKAAPGQLSAREIRKGLSLIGEIKSKKFAVIGNPVSASRSPAMHNALFRQMGLPHTYGTLETEDPEIVKKFIRSPDFGGASITIPLKLDIMPLLDEIAPEAVSIGAVNTIVCAPPAPDDQSQAPRLIGRNTDWQGMVRCLSDAGAYPAATPTTTSAGLVIGGGGTARAAIFALQSMGYSPIYVVGRSPDKLSSMTSTFAPDHDIRILEDVKALESLPTVAIGTIPGDKPIEPHMREVLCELFDLCEKANSDAEQARGISTKRILLEMAYKPSVTSLMQLASDSGWTVLPGLEALVAQGVYQCEYWTDITPVYEDARNAVMGVQPKDDDIST.

Residues 1–384 (MGVPTKISIL…HEPRASTVSN (384 aa)) are 3-dehydroquinate synthase. NAD(+)-binding positions include 44–46 (DTN), 81–84 (ESSK), 114–116 (GGV), and D119. Residue R130 participates in 7-phospho-2-dehydro-3-deoxy-D-arabino-heptonate binding. NAD(+) is bound at residue 139 to 140 (TT). 7-phospho-2-dehydro-3-deoxy-D-arabino-heptonate is bound by residues D146 and K152. Residue K161 coordinates NAD(+). N162 serves as a coordination point for 7-phospho-2-dehydro-3-deoxy-D-arabino-heptonate. NAD(+)-binding positions include 179–182 (FLNT) and N190. Position 194 (E194) interacts with Zn(2+). 7-phospho-2-dehydro-3-deoxy-D-arabino-heptonate contacts are provided by residues 194-197 (EVIK) and K250. The active-site Proton acceptor; for 3-dehydroquinate synthase activity is E260. Residues 264–268 (RNLLN) and H271 contribute to the 7-phospho-2-dehydro-3-deoxy-D-arabino-heptonate site. H271 provides a ligand contact to Zn(2+). The active-site Proton acceptor; for 3-dehydroquinate synthase activity is H275. 7-phospho-2-dehydro-3-deoxy-D-arabino-heptonate-binding residues include H287 and K356. H287 serves as a coordination point for Zn(2+). Residues 397 to 842 (VSPGVPKNLN…WDSLAQTFKV (446 aa)) form an EPSP synthase region. The active-site For EPSP synthase activity is the C824. The segment at 866–1057 (ASIFIIGMRG…RSKENTFFVS (192 aa)) is shikimate kinase. 872–879 (GMRGAGKT) lines the ATP pocket. The interval 1058–1278 (LTLPDLAPAA…AAPGQLSARE (221 aa)) is 3-dehydroquinase. The active-site Proton acceptor; for 3-dehydroquinate dehydratase activity is the H1181. The Schiff-base intermediate with substrate; for 3-dehydroquinate dehydratase activity role is filled by K1209. A shikimate dehydrogenase region spans residues 1291-1597 (SKKFAVIGNP…VQPKDDDIST (307 aa)).

In the N-terminal section; belongs to the sugar phosphate cyclases superfamily. Dehydroquinate synthase family. The protein in the 2nd section; belongs to the EPSP synthase family. It in the 3rd section; belongs to the shikimate kinase family. This sequence in the 4th section; belongs to the type-I 3-dehydroquinase family. In the C-terminal section; belongs to the shikimate dehydrogenase family. In terms of assembly, homodimer. The cofactor is Zn(2+).

Its subcellular location is the cytoplasm. The enzyme catalyses 7-phospho-2-dehydro-3-deoxy-D-arabino-heptonate = 3-dehydroquinate + phosphate. It carries out the reaction 3-dehydroquinate = 3-dehydroshikimate + H2O. The catalysed reaction is shikimate + NADP(+) = 3-dehydroshikimate + NADPH + H(+). It catalyses the reaction shikimate + ATP = 3-phosphoshikimate + ADP + H(+). The enzyme catalyses 3-phosphoshikimate + phosphoenolpyruvate = 5-O-(1-carboxyvinyl)-3-phosphoshikimate + phosphate. Its pathway is metabolic intermediate biosynthesis; chorismate biosynthesis; chorismate from D-erythrose 4-phosphate and phosphoenolpyruvate: step 2/7. It functions in the pathway metabolic intermediate biosynthesis; chorismate biosynthesis; chorismate from D-erythrose 4-phosphate and phosphoenolpyruvate: step 3/7. It participates in metabolic intermediate biosynthesis; chorismate biosynthesis; chorismate from D-erythrose 4-phosphate and phosphoenolpyruvate: step 4/7. The protein operates within metabolic intermediate biosynthesis; chorismate biosynthesis; chorismate from D-erythrose 4-phosphate and phosphoenolpyruvate: step 5/7. Its pathway is metabolic intermediate biosynthesis; chorismate biosynthesis; chorismate from D-erythrose 4-phosphate and phosphoenolpyruvate: step 6/7. The AROM polypeptide catalyzes 5 consecutive enzymatic reactions in prechorismate polyaromatic amino acid biosynthesis. In Blastomyces gilchristii (strain SLH14081) (Blastomyces dermatitidis), this protein is Pentafunctional AROM polypeptide.